Reading from the N-terminus, the 119-residue chain is Hemerythrin-like protein (119 aa).

Fe cation contacts are provided by His-26, His-56, Glu-60, His-75, His-79, His-107, and Asp-112.

It belongs to the hemerythrin family.

In terms of biological role, oxygen-binding protein. The oxygen-binding site contains two iron atoms. The polypeptide is Hemerythrin-like protein (nfa1) (Naegleria fowleri (Brain eating amoeba)).